We begin with the raw amino-acid sequence, 143 residues long: Large ribosomal subunit protein uL15 (143 aa).

The tract at residues 1–54 is disordered; that stretch reads MELNSIKPADGAKHAARRVGRGIGSGLGKTAGRGHKGQKSRSGGYHKVGFEGGQ. The span at 21–31 shows a compositional bias: gly residues; it reads RGIGSGLGKTA.

Belongs to the universal ribosomal protein uL15 family. As to quaternary structure, part of the 50S ribosomal subunit.

In terms of biological role, binds to the 23S rRNA. This Acidovorax ebreus (strain TPSY) (Diaphorobacter sp. (strain TPSY)) protein is Large ribosomal subunit protein uL15.